The primary structure comprises 241 residues: Pyridoxine 5'-phosphate synthase (241 aa).

Asparagine 7 serves as a coordination point for 3-amino-2-oxopropyl phosphate. Residue 9–10 (DH) participates in 1-deoxy-D-xylulose 5-phosphate binding. Arginine 18 provides a ligand contact to 3-amino-2-oxopropyl phosphate. Residue histidine 43 is the Proton acceptor of the active site. Residues arginine 45 and histidine 50 each contribute to the 1-deoxy-D-xylulose 5-phosphate site. Glutamate 70 serves as the catalytic Proton acceptor. Threonine 100 serves as a coordination point for 1-deoxy-D-xylulose 5-phosphate. Residue histidine 191 is the Proton donor of the active site. 3-amino-2-oxopropyl phosphate contacts are provided by residues glycine 192 and 213 to 214 (GH).

Belongs to the PNP synthase family. Homooctamer; tetramer of dimers.

It is found in the cytoplasm. The enzyme catalyses 3-amino-2-oxopropyl phosphate + 1-deoxy-D-xylulose 5-phosphate = pyridoxine 5'-phosphate + phosphate + 2 H2O + H(+). Its pathway is cofactor biosynthesis; pyridoxine 5'-phosphate biosynthesis; pyridoxine 5'-phosphate from D-erythrose 4-phosphate: step 5/5. Functionally, catalyzes the complicated ring closure reaction between the two acyclic compounds 1-deoxy-D-xylulose-5-phosphate (DXP) and 3-amino-2-oxopropyl phosphate (1-amino-acetone-3-phosphate or AAP) to form pyridoxine 5'-phosphate (PNP) and inorganic phosphate. This is Pyridoxine 5'-phosphate synthase from Nitrosospira multiformis (strain ATCC 25196 / NCIMB 11849 / C 71).